Consider the following 193-residue polypeptide: Interleukin-18 (193 aa).

Residues methionine 1–aspartate 36 constitute a propeptide that is removed on maturation.

Belongs to the IL-1 family. Forms a ternary complex with ligand-binding receptor subunit IL18R1 and signaling receptor subunit IL18RAP at the plasma membrane. Mature IL18 first binds to IL18R1 forming a low affinity binary complex, which then interacts with IL18RAP to form a high affinity ternary complex that signals inside the cell. Interacts with cargo receptor TMED10; the interaction mediates the translocation from the cytoplasm into the ERGIC (endoplasmic reticulum-Golgi intermediate compartment) and thereby secretion. In terms of processing, the pro-IL-18 precursor is processed by CASP1, CASP4 or CASP5 to yield its mature, active form. The pro-IL-18 precursor features autoinhibitory interactions between the propeptide and the post-cleavage-site region, preventing recognition by the IL18R1 receptor. Processing by CASP1, CASP4 or CASP5 induces conformational changes to generate critical receptor-binding sites. The mature form is then secreted and released in the extracellular milieu by passing through the gasdermin-D (GSDMD) pore. In contrast, cleavage by CASP3 inactivates IL18.

The protein localises to the cytoplasm. It localises to the cytosol. It is found in the secreted. Functionally, pro-inflammatory cytokine primarily involved in epithelial barrier repair, polarized T-helper 1 (Th1) cell and natural killer (NK) cell immune responses. Upon binding to IL18R1 and IL18RAP, forms a signaling ternary complex which activates NF-kappa-B, triggering synthesis of inflammatory mediators. Synergizes with IL12/interleukin-12 to induce IFNG synthesis from T-helper 1 (Th1) cells and natural killer (NK) cells. Involved in transduction of inflammation downstream of pyroptosis: its mature form is specifically released in the extracellular milieu by passing through the gasdermin-D (GSDMD) pore. In Bos taurus (Bovine), this protein is Interleukin-18 (IL18).